Here is a 153-residue protein sequence, read N- to C-terminus: 3-hydroxyacyl-[acyl-carrier-protein] dehydratase FabZ (153 aa).

The active site involves histidine 57.

This sequence belongs to the thioester dehydratase family. FabZ subfamily.

Its subcellular location is the cytoplasm. It carries out the reaction a (3R)-hydroxyacyl-[ACP] = a (2E)-enoyl-[ACP] + H2O. In terms of biological role, involved in unsaturated fatty acids biosynthesis. Catalyzes the dehydration of short chain beta-hydroxyacyl-ACPs and long chain saturated and unsaturated beta-hydroxyacyl-ACPs. This chain is 3-hydroxyacyl-[acyl-carrier-protein] dehydratase FabZ, found in Aeromonas salmonicida (strain A449).